A 426-amino-acid chain; its full sequence is MSVTLINNENNARYEFETIECTRGPKAVDFSKLFETTGFFSYDPGYSSTAGCQSKISYINGKKGELYYRGHRIEDLVAKYKYVDVCRLLLTGELPKNQDESLEFELELRHRSFVHESLLNMFSAFPSNAHPMAKLSSGVSILSTLYSTHQNMHTEEDYQTMARRIVAKIPTLAAICYRNEVGAPIIYPDIARSYVENILFMLRGYPYSRLKHTTQGEVGITPLEVEAFDKILTLHADHGQNASSTTVRNVASTGVHPYAAISAGISALWGHLHGGANEKVLLQLEEIGDVKNVDKYIARVKDKNDNFKLMGFGHRVYKSYDPRAKILKGLKDELHQKGVKMDERLSEIAAKVEEIALKDEYFIERNLYPNVDFYSGTILRALKIPVRFFTPVFVIGRTVGWCAQLLEHVKSPQARITRPRQVYVGD.

Residues histidine 314 and aspartate 372 contribute to the active site.

It belongs to the citrate synthase family.

It catalyses the reaction oxaloacetate + acetyl-CoA + H2O = citrate + CoA + H(+). It participates in carbohydrate metabolism; tricarboxylic acid cycle; isocitrate from oxaloacetate: step 1/2. This is Citrate synthase (gltA) from Helicobacter pylori (strain J99 / ATCC 700824) (Campylobacter pylori J99).